Reading from the N-terminus, the 210-residue chain is Large ribosomal subunit protein uL3 (210 aa).

It belongs to the universal ribosomal protein uL3 family. In terms of assembly, part of the 50S ribosomal subunit. Forms a cluster with proteins L14 and L19.

In terms of biological role, one of the primary rRNA binding proteins, it binds directly near the 3'-end of the 23S rRNA, where it nucleates assembly of the 50S subunit. The sequence is that of Large ribosomal subunit protein uL3 from Syntrophotalea carbinolica (strain DSM 2380 / NBRC 103641 / GraBd1) (Pelobacter carbinolicus).